A 231-amino-acid chain; its full sequence is NADH-ubiquinone oxidoreductase chain 4 (231 aa).

6 helical membrane-spanning segments follow: residues 1-21, 34-54, 63-85, 89-111, 118-138, and 169-189; these read PIAGSMVLAAILLKLGGYGII, MFLPFLVLALWGAILANLTCL, IAYSSISHMGLVVAAIIIQTPWG, AMALMIAHGFTSSALFCLANTTY, ILILTRGFHNILPMATTWWLL, and TIILLGMSMLITASYSLHMFL.

Belongs to the complex I subunit 4 family.

The protein localises to the mitochondrion membrane. The enzyme catalyses a ubiquinone + NADH + 5 H(+)(in) = a ubiquinol + NAD(+) + 4 H(+)(out). In terms of biological role, core subunit of the mitochondrial membrane respiratory chain NADH dehydrogenase (Complex I) that is believed to belong to the minimal assembly required for catalysis. Complex I functions in the transfer of electrons from NADH to the respiratory chain. The immediate electron acceptor for the enzyme is believed to be ubiquinone. The protein is NADH-ubiquinone oxidoreductase chain 4 (MT-ND4) of Trimeresurus cantori (Cantor's pit viper).